The sequence spans 434 residues: MQTTQETQGALERRIDMSVPMAEIDKEVDSRLKRMARTVKMPGFRPGKVPMKIVAQTYGSQARSEAIGAAVEKAFGDKVREQNLRVAGYPRIEPREAAVEGALEFSAVFEVYPQVPLGDLSGQKVERPVLTVGDAEVDKTIEVLRKQRTTFEAVDRPAQDGDRVVIDFAGRKDGELFEGGKAQDFPFVIGAGSMLKDFESAVGGLKVGETKTFEMTFPEDYHAADLAGQKVEFEITVKGVEAPILPAVDADLARALGVADGDVTKLRDEVRANLEREVKRRIQGKVKEQVMEALLVANPIEVPKALVEAESRQLAENAKRDLEMRGMNTKDIPVEPTWFADQAVRRVKLGLIMAELVNAKELYAKPEQVRAMIDEMAQSYEDPAELVRWYYAQPERLGQAEAVVIEDNVVAWVLSQTQTEDKTVTFDELMGNAA.

Positions 161 to 246 (GDRVVIDFAG…VKGVEAPILP (86 aa)) constitute a PPIase FKBP-type domain.

The protein belongs to the FKBP-type PPIase family. Tig subfamily.

Its subcellular location is the cytoplasm. It carries out the reaction [protein]-peptidylproline (omega=180) = [protein]-peptidylproline (omega=0). Involved in protein export. Acts as a chaperone by maintaining the newly synthesized protein in an open conformation. Functions as a peptidyl-prolyl cis-trans isomerase. The polypeptide is Trigger factor (Aromatoleum aromaticum (strain DSM 19018 / LMG 30748 / EbN1) (Azoarcus sp. (strain EbN1))).